The following is a 131-amino-acid chain: Transcription antitermination protein NusB (131 aa).

The protein belongs to the NusB family.

Functionally, involved in transcription antitermination. Required for transcription of ribosomal RNA (rRNA) genes. Binds specifically to the boxA antiterminator sequence of the ribosomal RNA (rrn) operons. The sequence is that of Transcription antitermination protein NusB from Bacillus subtilis (strain 168).